A 98-amino-acid chain; its full sequence is Integration host factor subunit beta (98 aa).

It belongs to the bacterial histone-like protein family. Heterodimer of an alpha and a beta chain.

Functionally, this protein is one of the two subunits of integration host factor, a specific DNA-binding protein that functions in genetic recombination as well as in transcriptional and translational control. This is Integration host factor subunit beta from Hahella chejuensis (strain KCTC 2396).